Reading from the N-terminus, the 201-residue chain is 3-isopropylmalate dehydratase small subunit (201 aa).

It belongs to the LeuD family. LeuD type 1 subfamily. Heterodimer of LeuC and LeuD.

The enzyme catalyses (2R,3S)-3-isopropylmalate = (2S)-2-isopropylmalate. Its pathway is amino-acid biosynthesis; L-leucine biosynthesis; L-leucine from 3-methyl-2-oxobutanoate: step 2/4. Catalyzes the isomerization between 2-isopropylmalate and 3-isopropylmalate, via the formation of 2-isopropylmaleate. The chain is 3-isopropylmalate dehydratase small subunit from Pasteurella multocida (strain Pm70).